The primary structure comprises 757 residues: Probable phospholipase C20G8.02, mitochondrial (757 aa).

The transit peptide at 1–13 (MILYIVLPFYVRT) directs the protein to the mitochondrion. A disordered region spans residues 289–330 (ESNSKPSTPVPTEELTSTTLLNDSSDPSDNFTPSNTESTIDL). The segment covering 302–329 (ELTSTTLLNDSSDPSDNFTPSNTESTID) has biased composition (polar residues). Serine 524 is an active-site residue. Residues 547 to 757 (LDFPVANFFA…LAHFILTQLL (211 aa)) enclose the DDHD domain.

The protein belongs to the PA-PLA1 family.

It localises to the mitochondrion. Functionally, probable phospholipase that hydrolyzes phosphatidic acid. This chain is Probable phospholipase C20G8.02, mitochondrial, found in Schizosaccharomyces pombe (strain 972 / ATCC 24843) (Fission yeast).